Here is a 311-residue protein sequence, read N- to C-terminus: 4-diphosphocytidyl-2-C-methyl-D-erythritol kinase (311 aa).

Lys13 is a catalytic residue. Position 114–124 (114–124 (PVAGGMAGGSA)) interacts with ATP. The active site involves Asp156.

It belongs to the GHMP kinase family. IspE subfamily.

It catalyses the reaction 4-CDP-2-C-methyl-D-erythritol + ATP = 4-CDP-2-C-methyl-D-erythritol 2-phosphate + ADP + H(+). It participates in isoprenoid biosynthesis; isopentenyl diphosphate biosynthesis via DXP pathway; isopentenyl diphosphate from 1-deoxy-D-xylulose 5-phosphate: step 3/6. Its function is as follows. Catalyzes the phosphorylation of the position 2 hydroxy group of 4-diphosphocytidyl-2C-methyl-D-erythritol. The protein is 4-diphosphocytidyl-2-C-methyl-D-erythritol kinase of Corynebacterium diphtheriae (strain ATCC 700971 / NCTC 13129 / Biotype gravis).